A 214-amino-acid polypeptide reads, in one-letter code: Outer-membrane lipoprotein LolB (214 aa).

A signal peptide spans 1-30; the sequence is MKHVSSPHPCAAIASARVWLGLVLVALLAG. Residue C31 is the site of N-palmitoyl cysteine attachment. C31 carries S-diacylglycerol cysteine lipidation.

It belongs to the LolB family. As to quaternary structure, monomer.

Its subcellular location is the cell outer membrane. Its function is as follows. Plays a critical role in the incorporation of lipoproteins in the outer membrane after they are released by the LolA protein. The sequence is that of Outer-membrane lipoprotein LolB from Chromohalobacter salexigens (strain ATCC BAA-138 / DSM 3043 / CIP 106854 / NCIMB 13768 / 1H11).